Here is a 492-residue protein sequence, read N- to C-terminus: N-succinylglutamate 5-semialdehyde dehydrogenase (492 aa).

Position 220 to 225 (220 to 225) interacts with NAD(+); sequence GSASTG. Residues Glu-243 and Cys-277 contribute to the active site.

It belongs to the aldehyde dehydrogenase family. AstD subfamily.

It catalyses the reaction N-succinyl-L-glutamate 5-semialdehyde + NAD(+) + H2O = N-succinyl-L-glutamate + NADH + 2 H(+). Its pathway is amino-acid degradation; L-arginine degradation via AST pathway; L-glutamate and succinate from L-arginine: step 4/5. In terms of biological role, catalyzes the NAD-dependent reduction of succinylglutamate semialdehyde into succinylglutamate. The sequence is that of N-succinylglutamate 5-semialdehyde dehydrogenase from Salmonella typhimurium (strain LT2 / SGSC1412 / ATCC 700720).